We begin with the raw amino-acid sequence, 241 residues long: Uridylate kinase (241 aa).

12–15 (KISG) is a binding site for ATP. An involved in allosteric activation by GTP region spans residues 20–25 (GEKGTG). Glycine 54 provides a ligand contact to UMP. Residues glycine 55 and arginine 59 each coordinate ATP. UMP contacts are provided by residues aspartate 74 and 135-142 (TGNPYFST). Asparagine 163, tyrosine 169, and aspartate 172 together coordinate ATP.

This sequence belongs to the UMP kinase family. Homohexamer.

It localises to the cytoplasm. It carries out the reaction UMP + ATP = UDP + ADP. Its pathway is pyrimidine metabolism; CTP biosynthesis via de novo pathway; UDP from UMP (UMPK route): step 1/1. With respect to regulation, allosterically activated by GTP. Inhibited by UTP. Catalyzes the reversible phosphorylation of UMP to UDP. This is Uridylate kinase from Lactobacillus delbrueckii subsp. bulgaricus (strain ATCC 11842 / DSM 20081 / BCRC 10696 / JCM 1002 / NBRC 13953 / NCIMB 11778 / NCTC 12712 / WDCM 00102 / Lb 14).